Consider the following 404-residue polypeptide: Argininosuccinate synthase (404 aa).

Residues 12–20 (AYSGGLDTS) and Ala40 each bind ATP. Tyr92 and Ser97 together coordinate L-citrulline. Gly122 contacts ATP. L-aspartate-binding residues include Thr124, Asn128, and Asp129. Asn128 lines the L-citrulline pocket. Residues Arg132, Ser181, Ser190, Glu266, and Tyr278 each contribute to the L-citrulline site.

It belongs to the argininosuccinate synthase family. Type 1 subfamily. In terms of assembly, homotetramer.

Its subcellular location is the cytoplasm. The enzyme catalyses L-citrulline + L-aspartate + ATP = 2-(N(omega)-L-arginino)succinate + AMP + diphosphate + H(+). It participates in amino-acid biosynthesis; L-arginine biosynthesis; L-arginine from L-ornithine and carbamoyl phosphate: step 2/3. The polypeptide is Argininosuccinate synthase (Erwinia tasmaniensis (strain DSM 17950 / CFBP 7177 / CIP 109463 / NCPPB 4357 / Et1/99)).